The primary structure comprises 640 residues: DNA gyrase subunit B (640 aa).

The 115-residue stretch at 423-537 (AELYIVEGDS…NGNIYIAQPP (115 aa)) folds into the Toprim domain. Mg(2+) is bound by residues E429, D502, and D504.

The protein belongs to the type II topoisomerase GyrB family. In terms of assembly, heterotetramer, composed of two GyrA and two GyrB chains. In the heterotetramer, GyrA contains the active site tyrosine that forms a transient covalent intermediate with DNA, while GyrB binds cofactors and catalyzes ATP hydrolysis. It depends on Mg(2+) as a cofactor. Mn(2+) serves as cofactor. Ca(2+) is required as a cofactor.

It is found in the cytoplasm. The catalysed reaction is ATP-dependent breakage, passage and rejoining of double-stranded DNA.. In terms of biological role, a type II topoisomerase that negatively supercoils closed circular double-stranded (ds) DNA in an ATP-dependent manner to modulate DNA topology and maintain chromosomes in an underwound state. Negative supercoiling favors strand separation, and DNA replication, transcription, recombination and repair, all of which involve strand separation. Also able to catalyze the interconversion of other topological isomers of dsDNA rings, including catenanes and knotted rings. Type II topoisomerases break and join 2 DNA strands simultaneously in an ATP-dependent manner. The polypeptide is DNA gyrase subunit B (Spiroplasma citri).